The sequence spans 41 residues: uncharacterized protein (41 aa).

This is an uncharacterized protein from Saccharomyces cerevisiae (strain ATCC 204508 / S288c) (Baker's yeast).